We begin with the raw amino-acid sequence, 419 residues long: 3-isopropylmalate dehydratase large subunit (419 aa).

[4Fe-4S] cluster contacts are provided by C300, C360, and C363.

Belongs to the aconitase/IPM isomerase family. LeuC type 2 subfamily. Heterodimer of LeuC and LeuD. [4Fe-4S] cluster is required as a cofactor.

The enzyme catalyses (2R,3S)-3-isopropylmalate = (2S)-2-isopropylmalate. Its pathway is amino-acid biosynthesis; L-leucine biosynthesis; L-leucine from 3-methyl-2-oxobutanoate: step 2/4. Functionally, catalyzes the isomerization between 2-isopropylmalate and 3-isopropylmalate, via the formation of 2-isopropylmaleate. The protein is 3-isopropylmalate dehydratase large subunit of Clostridium botulinum (strain Alaska E43 / Type E3).